A 450-amino-acid chain; its full sequence is Bifunctional protein GlmU (450 aa).

The tract at residues 1–226 (MLAVAVLAAG…PDEVNGINNR (226 aa)) is pyrophosphorylase. Residues 7–10 (LAAG), lysine 21, glutamine 73, and 78–79 (GT) each bind UDP-N-acetyl-alpha-D-glucosamine. Residue aspartate 103 coordinates Mg(2+). Positions 140, 155, 170, and 224 each coordinate UDP-N-acetyl-alpha-D-glucosamine. Mg(2+) is bound at residue asparagine 224. Residues 227 to 247 (KQLAQCEGVLQQRLRDYWMDE) form a linker region. The tract at residues 248–450 (GVTFVDPASC…TKDNWANRSI (203 aa)) is N-acetyltransferase. UDP-N-acetyl-alpha-D-glucosamine is bound by residues arginine 329 and lysine 347. Histidine 359 (proton acceptor) is an active-site residue. 2 residues coordinate UDP-N-acetyl-alpha-D-glucosamine: tyrosine 362 and asparagine 373. Acetyl-CoA-binding positions include alanine 376, 382 to 383 (NY), alanine 419, and arginine 436.

This sequence in the N-terminal section; belongs to the N-acetylglucosamine-1-phosphate uridyltransferase family. The protein in the C-terminal section; belongs to the transferase hexapeptide repeat family. As to quaternary structure, homotrimer. Requires Mg(2+) as cofactor.

Its subcellular location is the cytoplasm. It catalyses the reaction alpha-D-glucosamine 1-phosphate + acetyl-CoA = N-acetyl-alpha-D-glucosamine 1-phosphate + CoA + H(+). It carries out the reaction N-acetyl-alpha-D-glucosamine 1-phosphate + UTP + H(+) = UDP-N-acetyl-alpha-D-glucosamine + diphosphate. Its pathway is nucleotide-sugar biosynthesis; UDP-N-acetyl-alpha-D-glucosamine biosynthesis; N-acetyl-alpha-D-glucosamine 1-phosphate from alpha-D-glucosamine 6-phosphate (route II): step 2/2. It participates in nucleotide-sugar biosynthesis; UDP-N-acetyl-alpha-D-glucosamine biosynthesis; UDP-N-acetyl-alpha-D-glucosamine from N-acetyl-alpha-D-glucosamine 1-phosphate: step 1/1. It functions in the pathway bacterial outer membrane biogenesis; LPS lipid A biosynthesis. Catalyzes the last two sequential reactions in the de novo biosynthetic pathway for UDP-N-acetylglucosamine (UDP-GlcNAc). The C-terminal domain catalyzes the transfer of acetyl group from acetyl coenzyme A to glucosamine-1-phosphate (GlcN-1-P) to produce N-acetylglucosamine-1-phosphate (GlcNAc-1-P), which is converted into UDP-GlcNAc by the transfer of uridine 5-monophosphate (from uridine 5-triphosphate), a reaction catalyzed by the N-terminal domain. The polypeptide is Bifunctional protein GlmU (Synechococcus sp. (strain CC9902)).